A 108-amino-acid polypeptide reads, in one-letter code: Circadian clock oscillator protein KaiB (108 aa).

Belongs to the KaiB family. In terms of assembly, may undergo a major conformational rearrangment; in the free state forms homooligomers. When bound to KaiC switches to a monomeric thioredoxin-fold (KaiB(fs)). The active oscillator complex is probably KaiC(6):KaiB(6).

In terms of biological role, component of the KaiBC clock protein complex, which constitutes the main circadian regulator in cyanobacteria; it may modify the ATPase activity of KaiC. May be a metamorphic protein which reversibly switches between an inactive tetrameric fold and a rare, thioredoxin-like monomeric fold (KaiB(fs)). KaiB(fs) binds phospho-KaiC, and perhaps clock output effectors. The chain is Circadian clock oscillator protein KaiB from Prochlorococcus marinus (strain MIT 9515).